We begin with the raw amino-acid sequence, 357 residues long: Red-sensitive opsin-1 (357 aa).

The Extracellular portion of the chain corresponds to 1 to 49; it reads MAEHWGDAIYAARRKGDETTREAMFTYTNSNNTKDPFEGPNYHIAPRWV. N-linked (GlcNAc...) asparagine glycosylation occurs at N31. Residues 50–74 traverse the membrane as a helical segment; that stretch reads YNVATVWMFFVVVASTFTNGLVLVA. At 75–86 the chain is on the cytoplasmic side; the sequence is TAKFKKLRHPLN. Residues 87-112 form a helical membrane-spanning segment; the sequence is WILVNLAIADLGETLFASTISVINQF. Residues 113-126 lie on the Extracellular side of the membrane; it reads FGYFILGHPMCIFE. C123 and C200 are joined by a disulfide. A helical transmembrane segment spans residues 127–146; sequence GYTVSVCGIAALWSLTVISW. Topologically, residues 147–165 are cytoplasmic; that stretch reads ERWVVVCKPFGNVKFDAKW. A helical transmembrane segment spans residues 166 to 189; it reads ASAGIIFSWVWAAAWCAPPIFGWS. Residues 190–215 are Extracellular-facing; that stretch reads RYWPHGLKTSCGPDVFSGSEDPGVQS. The helical transmembrane segment at 216-243 threads the bilayer; it reads YMVVLMITCCIIPLAIIILCYIAVYLAI. The Cytoplasmic portion of the chain corresponds to 244 to 265; the sequence is HAVAQQQKDSESTQKAEKEVSR. The helical transmembrane segment at 266–289 threads the bilayer; sequence MVVVMIFAYCFCWGPYTFFACFAA. The Extracellular segment spans residues 290-297; the sequence is ANPGYAFH. The helical transmembrane segment at 298–322 threads the bilayer; the sequence is PLAAAMPAYFAKSATIYNPVIYVFM. N6-(retinylidene)lysine is present on K309. The Cytoplasmic portion of the chain corresponds to 323 to 357; that stretch reads NRQFRVCIMQLFGKKVDDGSEVSTSKTEVSSVAPA.

This sequence belongs to the G-protein coupled receptor 1 family. Opsin subfamily. In terms of processing, phosphorylated on some or all of the serine and threonine residues present in the C-terminal region. As to expression, retinal double cone principal photoreceptor cell outer segments.

It is found in the membrane. Visual pigments are the light-absorbing molecules that mediate vision. They consist of an apoprotein, opsin, covalently linked to cis-retinal. The polypeptide is Red-sensitive opsin-1 (opn1lw1) (Danio rerio (Zebrafish)).